Consider the following 703-residue polypeptide: Serotransferrin (703 aa).

The N-terminal stretch at 1-19 is a signal peptide; the sequence is MDLSLHVALCLGMLALCLA. Transferrin-like domains lie at 27–341 and 354–686; these read VRWC…ALKE and VRWC…SLNK. 2 cysteine pairs are disulfide-bonded: cysteine 30–cysteine 65 and cysteine 40–cysteine 56. The Fe(3+) site is built by aspartate 80 and tyrosine 112. Disulfide bonds link cysteine 135-cysteine 218, cysteine 180-cysteine 193, and cysteine 246-cysteine 260. Positions 137, 141, 143, and 144 each coordinate hydrogencarbonate. Position 212 (tyrosine 212) interacts with Fe(3+). Fe(3+) is bound at residue histidine 268. Residues 341-350 form a connecting region region; sequence EGVKEDDLAA. Disulfide bonds link cysteine 357/cysteine 389 and cysteine 367/cysteine 380. The Fe(3+) site is built by aspartate 404 and tyrosine 443. 7 disulfides stabilise this stretch: cysteine 414–cysteine 698, cysteine 432–cysteine 659, cysteine 466–cysteine 545, cysteine 490–cysteine 687, cysteine 500–cysteine 514, cysteine 511–cysteine 528, and cysteine 585–cysteine 599. Residues threonine 468, arginine 472, alanine 474, and glycine 475 each coordinate hydrogencarbonate. A Fe(3+)-binding site is contributed by tyrosine 539. A Fe(3+)-binding site is contributed by histidine 607.

The protein belongs to the transferrin family. Monomer. As to expression, plasma.

The protein resides in the secreted. Its function is as follows. Transferrins are iron binding transport proteins which can bind two Fe(3+) ions in association with the binding of an anion, usually bicarbonate. It is responsible for the transport of iron from sites of absorption and heme degradation to those of storage and utilization. Serum transferrin may also have a further role in stimulating cell proliferation. The sequence is that of Serotransferrin (tf) from Xenopus tropicalis (Western clawed frog).